The chain runs to 280 residues: Phosphatidylinositol N-acetylglucosaminyltransferase GPI2 subunit (280 aa).

Over 1–53 the chain is Cytoplasmic; that stretch reads MTRSPWKRLLWLKQEYPDNYTDPSFIELRARQKAESNQKSDRKLSEAARAQIR. Residues 54–74 form a helical membrane-spanning segment; it reads LDFISFYQTILNTSFIYITFT. Position 75 (Tyr75) is a topological domain, extracellular. The chain crosses the membrane as a helical span at residues 76–96; it reads IYYYGFDPIPPTIFLSFITLI. Topologically, residues 97–108 are cytoplasmic; that stretch reads ISRTKVDPLLSS. The chain crosses the membrane as a helical span at residues 109–129; the sequence is FMDVKSSLIITFAMLTLSPVL. Over 130 to 135 the chain is Extracellular; the sequence is KSLSKT. Residues 136-156 form a helical membrane-spanning segment; it reads TASDSIWTLSFWLTLWYIFVI. Topologically, residues 157-189 are cytoplasmic; it reads SSTKSKDKPSNLSTNILVALVAVLSSRLSTTID. A helical transmembrane segment spans residues 190-210; sequence VFCFLLICIQLNIILPTYLSV. The Extracellular segment spans residues 211-220; it reads TNKVVPIISN. A helical membrane pass occupies residues 221-241; it reads IIVYSFLNVALGWIYMLLIFF. The Cytoplasmic portion of the chain corresponds to 242-280; the sequence is ASVFYITVLPKWFIYWKINYHKRDNDLLSTWDARTPILD.

Belongs to the PIGC family. As to quaternary structure, component of the phosphatidylinositol N-acetylglucosaminyltransferase (GPI-GlcNAc transferase) complex composed of at least GPI1, GPI2, GPI3, GPI15, GPI19 and ERI1. Interacts with ERI1.

Its subcellular location is the membrane. It catalyses the reaction a 1,2-diacyl-sn-glycero-3-phospho-(1D-myo-inositol) + UDP-N-acetyl-alpha-D-glucosamine = a 6-(N-acetyl-alpha-D-glucosaminyl)-1-(1,2-diacyl-sn-glycero-3-phospho)-1D-myo-inositol + UDP + H(+). Its pathway is glycolipid biosynthesis; glycosylphosphatidylinositol-anchor biosynthesis. Functionally, part of the complex catalyzing the transfer of N-acetylglucosamine from UDP-N-acetylglucosamine to phosphatidylinositol, the first step of GPI biosynthesis. In Saccharomyces cerevisiae (strain ATCC 204508 / S288c) (Baker's yeast), this protein is Phosphatidylinositol N-acetylglucosaminyltransferase GPI2 subunit (GPI2).